We begin with the raw amino-acid sequence, 351 residues long: Anthranilate phosphoribosyltransferase (351 aa).

5-phospho-alpha-D-ribose 1-diphosphate is bound by residues G80, G83 to D84, T88, N90 to T93, K108 to S116, and S120. Residue G80 participates in anthranilate binding. S92 serves as a coordination point for Mg(2+). N111 contacts anthranilate. Residue R166 participates in anthranilate binding. Mg(2+)-binding residues include D229 and E230.

This sequence belongs to the anthranilate phosphoribosyltransferase family. As to quaternary structure, homodimer. Mg(2+) serves as cofactor.

It carries out the reaction N-(5-phospho-beta-D-ribosyl)anthranilate + diphosphate = 5-phospho-alpha-D-ribose 1-diphosphate + anthranilate. The protein operates within amino-acid biosynthesis; L-tryptophan biosynthesis; L-tryptophan from chorismate: step 2/5. Functionally, catalyzes the transfer of the phosphoribosyl group of 5-phosphorylribose-1-pyrophosphate (PRPP) to anthranilate to yield N-(5'-phosphoribosyl)-anthranilate (PRA). The protein is Anthranilate phosphoribosyltransferase of Chlorobaculum tepidum (strain ATCC 49652 / DSM 12025 / NBRC 103806 / TLS) (Chlorobium tepidum).